The following is a 954-amino-acid chain: Bifunctional glutamine synthetase adenylyltransferase/adenylyl-removing enzyme (954 aa).

The adenylyl removase stretch occupies residues 1–450 (MENISNKPLS…HFIETVGGRT (450 aa)). Residues 454 to 954 (GADLWTQQLW…MDIYQRILVD (501 aa)) are adenylyl transferase.

Belongs to the GlnE family. Mg(2+) serves as cofactor.

The enzyme catalyses [glutamine synthetase]-O(4)-(5'-adenylyl)-L-tyrosine + phosphate = [glutamine synthetase]-L-tyrosine + ADP. The catalysed reaction is [glutamine synthetase]-L-tyrosine + ATP = [glutamine synthetase]-O(4)-(5'-adenylyl)-L-tyrosine + diphosphate. In terms of biological role, involved in the regulation of glutamine synthetase GlnA, a key enzyme in the process to assimilate ammonia. When cellular nitrogen levels are high, the C-terminal adenylyl transferase (AT) inactivates GlnA by covalent transfer of an adenylyl group from ATP to specific tyrosine residue of GlnA, thus reducing its activity. Conversely, when nitrogen levels are low, the N-terminal adenylyl removase (AR) activates GlnA by removing the adenylyl group by phosphorolysis, increasing its activity. The regulatory region of GlnE binds the signal transduction protein PII (GlnB) which indicates the nitrogen status of the cell. The polypeptide is Bifunctional glutamine synthetase adenylyltransferase/adenylyl-removing enzyme (Shewanella woodyi (strain ATCC 51908 / MS32)).